The following is a 540-amino-acid chain: Solute carrier family 22 member 7 (540 aa).

12 helical membrane-spanning segments follow: residues 21–41, 144–164, 172–192, 202–222, 232–252, 257–277, 344–364, 378–398, 402–422, 429–449, 462–484, and 488–510; these read LVLL…PIFM, VTST…GYLS, LLLV…ASVN, LTGS…LEWL, VIST…GYLI, WLLL…WWVP, VSLC…GLTL, LLFG…VRLV, LTEA…LLVS, ITAL…TAYL, TGMG…VVLL, and WLLL…VLLL.

This sequence belongs to the major facilitator (TC 2.A.1) superfamily. Organic cation transporter (TC 2.A.1.19) family. Abundant expression in male and female kidney. In kidney, expressed at the brush border of the proximal tubule S3 segment (S3) in the outer stripe and medullary rays. In kidney, expression is higher in female than male. Also expressed in female liver.

The protein resides in the basolateral cell membrane. It is found in the apical cell membrane. The protein localises to the cell membrane. The catalysed reaction is orotate(out) + L-glutamate(in) = orotate(in) + L-glutamate(out). The enzyme catalyses 3',5'-cyclic GMP(in) = 3',5'-cyclic GMP(out). It catalyses the reaction GMP(in) = GMP(out). It carries out the reaction 2'-deoxyguanosine(in) = 2'-deoxyguanosine(out). The catalysed reaction is GDP(in) = GDP(out). The enzyme catalyses guanosine(in) = guanosine(out). It catalyses the reaction GTP(in) = GTP(out). It carries out the reaction 3',5'-cyclic AMP(in) = 3',5'-cyclic AMP(out). The catalysed reaction is creatinine(in) = creatinine(out). The enzyme catalyses prostaglandin E2(out) = prostaglandin E2(in). It catalyses the reaction 2-oxoglutarate(in) = 2-oxoglutarate(out). It carries out the reaction glutarate(in) = glutarate(out). The catalysed reaction is urate(out) = urate(in). The enzyme catalyses estrone 3-sulfate(out) = estrone 3-sulfate(in). Its function is as follows. Functions as a Na(+)-independent bidirectional multispecific transporter. Contributes to the renal and hepatic elimination of endogenous organic compounds from the systemic circulation into the urine and bile, respectively. Capable of transporting a wide range of purine and pyrimidine nucleobases, nucleosides, and nucleotides with cGMP, 2'deoxyguanosine and GMP being the preferred substrates. Functions as a pH- and chloride-independent cGMP bidirectional facilitative transporter that can regulate both intracellular and extracellular levels of cGMP and may be involved in cGMP signaling pathways. Mediates orotate/glutamate bidirectional exchange and most likely display a physiological role in hepatic release of glutamate into the blood. Involved in renal secretion and possible reabsorption of creatinine. Able to uptake prostaglandin E2 (PGE2) and may contribute to PGE2 renal excretion. Also transports alpha-ketoglutarate and urate. Unlike human hortolog, able to transport glutarate. Apart from the orotate/glutamate exchange, the counterions for the uptake of other SLC22A7/OAT2 substrates remain to be identified. The chain is Solute carrier family 22 member 7 from Mus musculus (Mouse).